Here is a 166-residue protein sequence, read N- to C-terminus: MFDGIGFMELLLIGVLGLVVLGPERLPVAVRSITSWIRAMKRMANSVKEELEQELKIEQLHADLKKAESKGLSNLSPELKESIEQLKQAAQSVNRPYQVQDPVKDTPAPENQIYSPVASTVQTSPAQASQANPTATVEASPAPASPATPSEPSQGADTRSNPKANG.

A helical membrane pass occupies residues 2–22 (FDGIGFMELLLIGVLGLVVLG). Positions 69–166 (SKGLSNLSPE…DTRSNPKANG (98 aa)) are disordered. Polar residues-rich tracts occupy residues 88–97 (QAAQSVNRPY) and 112–132 (QIYS…SQAN). Residues 133–153 (PTATVEASPAPASPATPSEPS) are compositionally biased toward low complexity. Polar residues predominate over residues 155 to 166 (GADTRSNPKANG).

The protein belongs to the TatB family. As to quaternary structure, the Tat system comprises two distinct complexes: a TatABC complex, containing multiple copies of TatA, TatB and TatC subunits, and a separate TatA complex, containing only TatA subunits. Substrates initially bind to the TatABC complex, which probably triggers association of the separate TatA complex to form the active translocon.

The protein resides in the cell inner membrane. Its function is as follows. Part of the twin-arginine translocation (Tat) system that transports large folded proteins containing a characteristic twin-arginine motif in their signal peptide across membranes. Together with TatC, TatB is part of a receptor directly interacting with Tat signal peptides. TatB may form an oligomeric binding site that transiently accommodates folded Tat precursor proteins before their translocation. The polypeptide is Sec-independent protein translocase protein TatB (Shewanella baltica (strain OS155 / ATCC BAA-1091)).